We begin with the raw amino-acid sequence, 477 residues long: ACT domain-containing protein ACR1 (477 aa).

ACT domains follow at residues 38-124, 134-214, 283-358, and 361-441; these read LIKV…REVQ, AFEI…GDVS, MVNV…RASQ, and KLEI…MMPR. Positions 329 to 345 match the Bipartite nuclear localization signal motif; sequence KKNGGTLETEGQRERLR.

As to expression, expressed in flowers and siliques.

It localises to the nucleus. Functionally, may bind amino acids. The polypeptide is ACT domain-containing protein ACR1 (Arabidopsis thaliana (Mouse-ear cress)).